A 616-amino-acid chain; its full sequence is 2-isopropylmalate synthase (616 aa).

The disordered stretch occupies residues 1–34 (MSPNDAFISAPAKIETPVGPRNEGQPAWNKQRGS). The Pyruvate carboxyltransferase domain maps to 67–341 (PQWCAVDLRD…DPQLDFTDIR (275 aa)). Positions 76, 280, 282, and 316 each coordinate Mg(2+). The regulatory domain stretch occupies residues 490-616 (RTAPVEQIAL…NHEAVLAGGV (127 aa)).

It belongs to the alpha-IPM synthase/homocitrate synthase family. LeuA type 2 subfamily. As to quaternary structure, homodimer. Requires Mg(2+) as cofactor.

The protein localises to the cytoplasm. It catalyses the reaction 3-methyl-2-oxobutanoate + acetyl-CoA + H2O = (2S)-2-isopropylmalate + CoA + H(+). It functions in the pathway amino-acid biosynthesis; L-leucine biosynthesis; L-leucine from 3-methyl-2-oxobutanoate: step 1/4. In terms of biological role, catalyzes the condensation of the acetyl group of acetyl-CoA with 3-methyl-2-oxobutanoate (2-ketoisovalerate) to form 3-carboxy-3-hydroxy-4-methylpentanoate (2-isopropylmalate). The sequence is that of 2-isopropylmalate synthase from Corynebacterium glutamicum (strain R).